The sequence spans 232 residues: Orotate phosphoribosyltransferase (232 aa).

Residues R107, K108, K111, and 133-141 (EDLTTDGGS) contribute to the 5-phospho-alpha-D-ribose 1-diphosphate site. T137 serves as a coordination point for orotate.

This sequence belongs to the purine/pyrimidine phosphoribosyltransferase family. PyrE subfamily. In terms of assembly, homodimer. Mg(2+) is required as a cofactor.

The catalysed reaction is orotidine 5'-phosphate + diphosphate = orotate + 5-phospho-alpha-D-ribose 1-diphosphate. It participates in pyrimidine metabolism; UMP biosynthesis via de novo pathway; UMP from orotate: step 1/2. In terms of biological role, catalyzes the transfer of a ribosyl phosphate group from 5-phosphoribose 1-diphosphate to orotate, leading to the formation of orotidine monophosphate (OMP). The chain is Orotate phosphoribosyltransferase from Cereibacter sphaeroides (strain ATCC 17025 / ATH 2.4.3) (Rhodobacter sphaeroides).